Reading from the N-terminus, the 98-residue chain is Small ribosomal subunit protein uS19 (98 aa).

The disordered stretch occupies residues 77–98; sequence TRTYRGHAGGKAEKGGSAPKRK.

Belongs to the universal ribosomal protein uS19 family.

Functionally, protein S19 forms a complex with S13 that binds strongly to the 16S ribosomal RNA. This Prosthecochloris aestuarii (strain DSM 271 / SK 413) protein is Small ribosomal subunit protein uS19.